Consider the following 39-residue polypeptide: Cytochrome b6-f complex subunit 5 (39 aa).

The helical transmembrane segment at 5 to 25 (LLCGIVLGLVPITLLGLFVSA) threads the bilayer.

Belongs to the PetG family. The 4 large subunits of the cytochrome b6-f complex are cytochrome b6, subunit IV (17 kDa polypeptide, PetD), cytochrome f and the Rieske protein, while the 4 small subunits are PetG, PetL, PetM and PetN. The complex functions as a dimer.

It is found in the cellular thylakoid membrane. In terms of biological role, component of the cytochrome b6-f complex, which mediates electron transfer between photosystem II (PSII) and photosystem I (PSI), cyclic electron flow around PSI, and state transitions. PetG is required for either the stability or assembly of the cytochrome b6-f complex. This chain is Cytochrome b6-f complex subunit 5, found in Prochlorococcus marinus (strain MIT 9301).